Reading from the N-terminus, the 184-residue chain is ATP synthase subunit b, chloroplastic (184 aa).

A helical transmembrane segment spans residues 4–24 (IINLVIFSGYWPIAGNFGLNT).

The protein belongs to the ATPase B chain family. F-type ATPases have 2 components, F(1) - the catalytic core - and F(0) - the membrane proton channel. F(1) has five subunits: alpha(3), beta(3), gamma(1), delta(1), epsilon(1). F(0) has four main subunits: a(1), b(1), b'(1) and c(10-14). The alpha and beta chains form an alternating ring which encloses part of the gamma chain. F(1) is attached to F(0) by a central stalk formed by the gamma and epsilon chains, while a peripheral stalk is formed by the delta, b and b' chains.

The protein localises to the plastid. Its subcellular location is the chloroplast thylakoid membrane. Functionally, f(1)F(0) ATP synthase produces ATP from ADP in the presence of a proton or sodium gradient. F-type ATPases consist of two structural domains, F(1) containing the extramembraneous catalytic core and F(0) containing the membrane proton channel, linked together by a central stalk and a peripheral stalk. During catalysis, ATP synthesis in the catalytic domain of F(1) is coupled via a rotary mechanism of the central stalk subunits to proton translocation. In terms of biological role, component of the F(0) channel, it forms part of the peripheral stalk, linking F(1) to F(0). This is ATP synthase subunit b, chloroplastic from Physcomitrium patens (Spreading-leaved earth moss).